The primary structure comprises 705 residues: Structure-specific endonuclease subunit SLX1 homolog (705 aa).

The GIY-YIG domain occupies 4–90; sequence RFHCVYLLTS…TASARLRHAI (87 aa). 2 disordered regions span residues 155 to 192 and 290 to 323; these read RASSPRVGTQQHSQRSSSLQGQADGVATPPLPALDSKG and ASFASDSDDEDTRRFAPYCPSTGSRTPSPQRVHT. Polar residues-rich tracts occupy residues 160 to 175 and 310 to 320; these read RVGTQQHSQRSSSLQG and STGSRTPSPQR. The SLX1-type zinc-finger motif lies at 446 to 526; sequence CSLCTLPLQP…PSQPCPCPLC (81 aa). Residues 595 to 604 are compositionally biased toward low complexity; it reads KGAGEAPGAA. Positions 595–628 are disordered; that stretch reads KGAGEAPGAASTVRASTMHVGPARRDAPRVSSPS.

This sequence belongs to the SLX1 family. Forms a heterodimer with a member of the SLX4 family. It depends on a divalent metal cation as a cofactor.

The protein resides in the nucleus. Its function is as follows. Catalytic subunit of a heterodimeric structure-specific endonuclease that resolves DNA secondary structures generated during DNA repair and recombination. Has endonuclease activity towards branched DNA substrates, introducing single-strand cuts in duplex DNA close to junctions with ss-DNA. The polypeptide is Structure-specific endonuclease subunit SLX1 homolog (Leishmania infantum).